Reading from the N-terminus, the 330-residue chain is Aspartate--ammonia ligase (330 aa).

Belongs to the class-II aminoacyl-tRNA synthetase family. AsnA subfamily.

It localises to the cytoplasm. It carries out the reaction L-aspartate + NH4(+) + ATP = L-asparagine + AMP + diphosphate + H(+). Its pathway is amino-acid biosynthesis; L-asparagine biosynthesis; L-asparagine from L-aspartate (ammonia route): step 1/1. The polypeptide is Aspartate--ammonia ligase (Escherichia coli O45:K1 (strain S88 / ExPEC)).